The sequence spans 464 residues: Divalent metal cation transporter MntH (464 aa).

A run of 11 helical transmembrane segments spans residues 57–77 (ILIA…AGGA), 82–102 (SLLS…SMAA), 125–145 (GIIL…AEII), 157–177 (IPLV…LLLM), 186–206 (AIVA…VFLA), 229–249 (MLYL…LYLG), 281–301 (LTIA…LFFG), 321–341 (IVGA…LLSS), 376–396 (LLSV…EAKI), 399–419 (LLTL…VPLV), and 443–463 (VATV…VGVI).

It belongs to the NRAMP family.

It localises to the cell membrane. H(+)-stimulated, divalent metal cation uptake system. In Levilactobacillus brevis (Lactobacillus brevis), this protein is Divalent metal cation transporter MntH.